The chain runs to 195 residues: Pyridoxal 5'-phosphate synthase subunit PdxT (195 aa).

46-48 provides a ligand contact to L-glutamine; that stretch reads GES. Residue C78 is the Nucleophile of the active site. Residues R106 and 134–135 each bind L-glutamine; that span reads IR. Residues H170 and E172 each act as charge relay system in the active site.

Belongs to the glutaminase PdxT/SNO family. In terms of assembly, in the presence of PdxS, forms a dodecamer of heterodimers. Only shows activity in the heterodimer.

The enzyme catalyses aldehydo-D-ribose 5-phosphate + D-glyceraldehyde 3-phosphate + L-glutamine = pyridoxal 5'-phosphate + L-glutamate + phosphate + 3 H2O + H(+). The catalysed reaction is L-glutamine + H2O = L-glutamate + NH4(+). It participates in cofactor biosynthesis; pyridoxal 5'-phosphate biosynthesis. Functionally, catalyzes the hydrolysis of glutamine to glutamate and ammonia as part of the biosynthesis of pyridoxal 5'-phosphate. The resulting ammonia molecule is channeled to the active site of PdxS. The polypeptide is Pyridoxal 5'-phosphate synthase subunit PdxT (Pseudothermotoga lettingae (strain ATCC BAA-301 / DSM 14385 / NBRC 107922 / TMO) (Thermotoga lettingae)).